The chain runs to 500 residues: MSSANLSIKENGAMVVFGASGDLSKKKTFPALFSLFSEGRLPKDIRIVGYARSKIEHEDFLDRITQNIKIDEEDSQAKEKLEEFKKRCSYYRGSYDKPEDFEGLNSHLCEREGDRSTHNRIFYLALPPDVFVSVATNLKKKCVPEKGIARLVIEKPFGVDLKSAQELQSQLAPLFDEKEIYRIDHYLGKEMVQNLVHLRFCNPVISHLWDKNSISSVQITFKEPIGTEGRGGYFDSSTIVRDIVQNHLVQILTLLTMETPTTFSADDLRDEKVKVLRRTRLGDLKDIVLGQYVKSKDGKKPGYLDDETVPKGSRCPTYSAIPCFIDTERWRGVPFLLKAGKAMDIGKVEIRVQFKAAANGLFKDAYHNELVIRVQPDEAIYFKMNIKQPGLSEAPLLTDLDLTYSRRFKNMKLHEAYEALFLDAFAGDQSRFARIDELECAWSLVDPLLKYMEEEKPVPEPYEYGSDGPECLYSFLKKFGYIYDSPDYYDYPVMSVPSDH.

NADP(+) is bound by residues 18 to 25, R52, and K155; that span reads GASGDLSK. D-glucose 6-phosphate-binding positions include K155, 185–189, E223, and D242; that span reads HYLGK. The active-site Proton acceptor is the H247. Residue K338 coordinates NADP(+). K341 provides a ligand contact to D-glucose 6-phosphate. The NADP(+) site is built by K347, R351, and R373. Q375 is a binding site for D-glucose 6-phosphate. NADP(+) contacts are provided by residues 381 to 383, 401 to 403, and Y483; these read YFK and DLT.

This sequence belongs to the glucose-6-phosphate dehydrogenase family.

The protein resides in the cytoplasm. It localises to the cytosol. It carries out the reaction D-glucose 6-phosphate + NADP(+) = 6-phospho-D-glucono-1,5-lactone + NADPH + H(+). It functions in the pathway carbohydrate degradation; pentose phosphate pathway; D-ribulose 5-phosphate from D-glucose 6-phosphate (oxidative stage): step 1/3. Catalyzes the rate-limiting step of the oxidative pentose-phosphate pathway, which represents a route for the dissimilation of carbohydrates besides glycolysis. The main function of this enzyme is to provide reducing power (NADPH) and pentose phosphates for fatty acid and nucleic acid synthesis. This Schizosaccharomyces pombe (strain 972 / ATCC 24843) (Fission yeast) protein is Glucose-6-phosphate 1-dehydrogenase.